A 156-amino-acid chain; its full sequence is UPF0232 protein BL0636 (156 aa).

It belongs to the UPF0232 family.

The chain is UPF0232 protein BL0636 from Bifidobacterium longum (strain NCC 2705).